Consider the following 317-residue polypeptide: Tenomodulin (317 aa).

Residues 1–30 (MAKNPPENCEGCHILNAEALKSKKIRKSLK) are Cytoplasmic-facing. A helical; Signal-anchor for type II membrane protein transmembrane segment spans residues 31-50 (ICGLVFGILALTLIVLFWGS). The Extracellular portion of the chain corresponds to 51–317 (KHFWPEVSKK…WWVARMLGRV (267 aa)). The BRICHOS domain occupies 93 to 186 (GNGTDETLEV…ICDNVTMYWI (94 aa)). A glycan (N-linked (GlcNAc...) asparagine) is linked at Asn-94. Cys-120 and Cys-178 are joined by a disulfide. N-linked (GlcNAc...) asparagine glycosylation is present at Asn-180. Position 239 is a phosphoserine (Ser-239).

The protein belongs to the chondromodulin-1 family. In terms of tissue distribution, highly expressed in tendons.

The protein resides in the membrane. The protein localises to the nucleus envelope. In terms of biological role, may be an angiogenesis inhibitor. The polypeptide is Tenomodulin (Tnmd) (Rattus norvegicus (Rat)).